Reading from the N-terminus, the 354-residue chain is Protein Wnt-11 (354 aa).

An N-terminal signal peptide occupies residues 1 to 23 (MTEYRNFLLLFITSLSVIYPCTG). Residues N32, N39, and N89 are each glycosylated (N-linked (GlcNAc...) asparagine). 9 disulfide bridges follow: C129-C137, C139-C156, C209-C223, C211-C218, C283-C314, C299-C309, C329-C344, C331-C341, and C336-C337. Residue S215 is the site of O-palmitoleoyl serine; by PORCN attachment. An N-linked (GlcNAc...) asparagine glycan is attached at N300.

It belongs to the Wnt family. Palmitoleoylation is required for efficient binding to frizzled receptors. Depalmitoleoylation leads to Wnt signaling pathway inhibition.

The protein localises to the secreted. It localises to the extracellular space. It is found in the extracellular matrix. In terms of biological role, ligand for fzd5, a member of the G-protein coupled frizzled receptor family. Plays a role in early eye development, possibly through wnt non-canonical signaling. Promotes eye formation, at least partially, by antagonizing the Wnt/beta-catenin pathway. In addition, promotes coherence of eye field cells, potentially contributing to the coordinated morphogenetic behaviors of cells in the nascent eye field. The polypeptide is Protein Wnt-11 (wnt11) (Danio rerio (Zebrafish)).